We begin with the raw amino-acid sequence, 429 residues long: Probable imidazolonepropionase (429 aa).

The 4-imidazolone-5-propanoate site is built by Tyr-161 and His-194. Tyr-161 lines the N-formimidoyl-L-glutamate pocket. Residue His-262 participates in Fe(3+) binding. A Zn(2+)-binding site is contributed by His-262. Glu-265 lines the 4-imidazolone-5-propanoate pocket. Residue Asp-336 coordinates Fe(3+). Asp-336 is a binding site for Zn(2+). Asn-338 lines the N-formimidoyl-L-glutamate pocket.

This sequence belongs to the metallo-dependent hydrolases superfamily. HutI family. The cofactor is Zn(2+). It depends on Fe(3+) as a cofactor.

The enzyme catalyses 4-imidazolone-5-propanoate + H2O = N-formimidoyl-L-glutamate. It functions in the pathway amino-acid degradation; L-histidine degradation into L-glutamate; N-formimidoyl-L-glutamate from L-histidine: step 3/3. This chain is Probable imidazolonepropionase (amdhd1), found in Nematostella vectensis (Starlet sea anemone).